Consider the following 457-residue polypeptide: Siroheme synthase (457 aa).

The tract at residues 1–204 is precorrin-2 dehydrogenase /sirohydrochlorin ferrochelatase; it reads MEIFPISLKL…DNLDIANQMM (204 aa). NAD(+) contacts are provided by residues 22-23 and 43-44; these read HI and PD. Ser-129 carries the post-translational modification Phosphoserine. Positions 216–457 are uroporphyrinogen-III C-methyltransferase; the sequence is GEVYLVGAGP…VSLREQLQWL (242 aa). Pro-225 provides a ligand contact to S-adenosyl-L-methionine. Asp-248 (proton acceptor) is an active-site residue. The Proton donor role is filled by Lys-270. S-adenosyl-L-methionine-binding positions include 301–303, Ile-306, 331–332, Met-383, and Gly-412; these read GGD and TA.

In the N-terminal section; belongs to the precorrin-2 dehydrogenase / sirohydrochlorin ferrochelatase family. It in the C-terminal section; belongs to the precorrin methyltransferase family.

It catalyses the reaction uroporphyrinogen III + 2 S-adenosyl-L-methionine = precorrin-2 + 2 S-adenosyl-L-homocysteine + H(+). It carries out the reaction precorrin-2 + NAD(+) = sirohydrochlorin + NADH + 2 H(+). The enzyme catalyses siroheme + 2 H(+) = sirohydrochlorin + Fe(2+). It participates in cofactor biosynthesis; adenosylcobalamin biosynthesis; precorrin-2 from uroporphyrinogen III: step 1/1. It functions in the pathway cofactor biosynthesis; adenosylcobalamin biosynthesis; sirohydrochlorin from precorrin-2: step 1/1. Its pathway is porphyrin-containing compound metabolism; siroheme biosynthesis; precorrin-2 from uroporphyrinogen III: step 1/1. The protein operates within porphyrin-containing compound metabolism; siroheme biosynthesis; siroheme from sirohydrochlorin: step 1/1. It participates in porphyrin-containing compound metabolism; siroheme biosynthesis; sirohydrochlorin from precorrin-2: step 1/1. Functionally, multifunctional enzyme that catalyzes the SAM-dependent methylations of uroporphyrinogen III at position C-2 and C-7 to form precorrin-2 via precorrin-1. Then it catalyzes the NAD-dependent ring dehydrogenation of precorrin-2 to yield sirohydrochlorin. Finally, it catalyzes the ferrochelation of sirohydrochlorin to yield siroheme. This is Siroheme synthase from Acinetobacter baylyi (strain ATCC 33305 / BD413 / ADP1).